The primary structure comprises 287 residues: Phosphatidylglycerol--prolipoprotein diacylglyceryl transferase (287 aa).

The next 4 membrane-spanning stretches (helical) occupy residues 26–46 (VAIR…WWLA), 71–91 (FLVW…ILFY), 106–126 (IWRG…AMIV), and 132–152 (GLPV…GLFF). Residue Arg-154 coordinates a 1,2-diacyl-sn-glycero-3-phospho-(1'-sn-glycerol). The next 3 membrane-spanning stretches (helical) occupy residues 187-207 (SQLY…QVLA), 217-237 (GVIS…VEFF), and 251-271 (WLTM…WAIW).

This sequence belongs to the Lgt family.

Its subcellular location is the cell inner membrane. It catalyses the reaction L-cysteinyl-[prolipoprotein] + a 1,2-diacyl-sn-glycero-3-phospho-(1'-sn-glycerol) = an S-1,2-diacyl-sn-glyceryl-L-cysteinyl-[prolipoprotein] + sn-glycerol 1-phosphate + H(+). Its pathway is protein modification; lipoprotein biosynthesis (diacylglyceryl transfer). Functionally, catalyzes the transfer of the diacylglyceryl group from phosphatidylglycerol to the sulfhydryl group of the N-terminal cysteine of a prolipoprotein, the first step in the formation of mature lipoproteins. In Allorhizobium ampelinum (strain ATCC BAA-846 / DSM 112012 / S4) (Agrobacterium vitis (strain S4)), this protein is Phosphatidylglycerol--prolipoprotein diacylglyceryl transferase.